A 2371-amino-acid chain; its full sequence is MAAPESGPALSPGTAEGEEETILYDLLVNTEWPPETEVQPRGNQKHGASFIITKAIRDRLLFLRQYIWYSPAPFLLPDGLVRLVNKQINWHLVLASNGKLLAAVQDQCVEIRSAKDDFTSIIGKCQVPKDPKPQWRRVAWSYDCTLLAYAESTGTVRVFDLMGSELFVISPASSFIGDLSYAIAGLIFLEYKASAQWSAELLVINYRGELRSYLVSVGTNQSYQESHCFSFSSHYPHGINTAIYHPGHRLLLVGGCETAEVGMSKASSCGLSAWRVLSGSPYYKQVTNGGDGVTAVPKTLGLLRMLSVKFYSRQGQEQDGIFKMSLSPDGMLLAAIHFSGKLSIWAIPSLKQQGEWGQNEQPGYDDLNPDWRLSTEKRKKIKDKESFYPLIDVNWWADSAVTLARCSGALTVSSVKTLKNLLGKSCEWFEPSPQVTATHDGGFLSLECEIKLAPKRSRLETRAGEEDEGEEDSDSDYEISAKARYFGYIKQGLYLVTEMERFAPPRKRPRTITKNYRLVSLRSTTPEELYQRKIESEEYEEALSLAHTYGLDTDLVYQRQWRKSAVNVASIQNYLSKIKKRSWVLHECLERVPENVDAAKELLQYGLKGTDLEALLAIGKGADDGRFTLPGEIDIDSISYEELSPPDEEPAKNKKEKELKKRQELLKLVNFSKLTLEQKELCRCRRKLLTYLDRLATYEEILGVPHASEQRYDAEFFKKFRNQNIVLSARTYAQESNVQALEILFTYHGSDLLPHRLAILSNFPETTSPHEYSVLLPEACFNGDSLMIIPWHEHKHRAKDWCEELACRMVVEPNLQDESEFLYAAQPELLRFRMTQLTVEKVMDWYQTRAEEIEHYARQVDCALSLIRLGMERNIPGLLVLCDNLVTLETLVYEARCDVTLTLKELQQMKDIEKLRLLMNSCSEDKYVTSAYQWMVPFLHRCEKQSPGVANELLKEYLVTLAKGDLKFPLKIFQHSKPDLQQKIIPDQDQLMAIALECIYTCERNDQLCLCYDLLECLPERGYGDKTEATTKLHDMVDQLEQILSVSELLEKHGLEKPISFVKNTQSSSEEARKLMVRLTRHTGRKQPPVSESHWRTLLQDMLTMQQNVYTCLDSDACYEIFTESLLCSSRLENIHLAGQMMHCSACSENPPAGIAHKGKPHYRVSYEKSIDLVLAASREYFNSSTNLTDSCMDLARCCLQLITDRPPAIQEELDLIQAVGCLEEFGVKILPLQVRLCPDRISLIKECISQSPTCYKQSTKLLGLAELLRVAGENPEERRGQVLILLVEQALRFHDYKAASMHCQELMATGYPKSWDVCSQLGQSEGYQDLATRQELMAFALTHCPPSSIELLLAASSSLQTEILYQRVNFQIHHEGGENISASPLTSKAVQEDEVGVPGSNSADLLRWTTATTMKVLSNTTTTTKAVLQAVSDGQWWKKSLTYLRPLQGQKCGGAYQIGTTANEDLEKQGCHPFYESVISNPFVAESEGTYDTYQHVPVESFAEVLLRTGKLAEAKNKGEVFPTTEVLLQLASEALPNDMTLALAYLLALPQVLDANRCFEKQSPSALSLQLAAYYYSLQIYARLAPCFRDKCHPLYRADPKELIKMVTRHVTRHEHEAWPEDLISLTKQLHCYNERLLDFTQAQILQGLRKGVDVQRFTADDQYKRETILGLAETLEESVYSIAISLAQRYSVSRWEVFMTHLEFLFTDSGLSTLEIENRAQDLHLFETLKTDPEAFHQHMVKYIYPTIGGFDHERLQYYFTLLENCGCADLGNCAIKPETHIRLLKKFKVVASGLNYKKLTDENMSPLEALEPVLSSQNILSISKLVPKIPEKDGQMLSPSSLYTIWLQKLFWTGDPHLIKQVPGSSPEWLHAYDVCMKYFDRLHPGDLITVVDAVTFSPKAVTKLSVEARKEMTRKAIKTVKHFIEKPRKRNSEDEAQEAKDSKVTYADTLNHLEKSLAHLETLSHSFILSLKNSEQETLQKYSHLYDLSRSEKEKLHDEAVAICLDGQPLAMIQQLLEVAVGPLDISPKDIVQSAIMKIISALSGGSADLGGPRDPLKVLEGVVAAVHASVDKGEELVSPEDLLEWLRPFCADDAWPVRPRIHVLQILGQSFHLTEEDSKLLVFFRTEAILKASWPQRQVDIADIENEENRYCLFMELLESSHHEAEFQHLVLLLQAWPPMKSEYVITNNPWVRLATVMLTRCTMENKEGLGNEVLKMCRSLYNTKQMLPAEGVKELCLLLLNQSLLLPSLKLLLESRDEHLHEMALEQITAVTTVNDSNCDQELLSLLLDAKLLVKCVSTPFYPRIVDHLLASLQQGRWDAEELGRHLREAGHEAEAGSLLLAVRGTHQAFRTFSTALRAAQHWV.

An interaction with USE1 region spans residues 1–1035; it reads MAAPESGPAL…KTEATTKLHD (1035 aa). WD repeat units lie at residues 130–169 and 316–355; these read DPKP…LFVI and QEQD…QQGE. Phosphoserine occurs at positions 473 and 475. Residues 1036 to 2371 are interaction with ZW10 and RINT1; the sequence is MVDQLEQILS…TALRAAQHWV (1336 aa). Lysine 1057 carries the N6-acetyllysine modification.

As to quaternary structure, component of the NRZ complex composed of NBAS, ZW10 and RINT1/TIP20L; NRZ associates with SNAREs STX18, USE1, BNIP1/SEC20L and SEC22B (the assembly has been described as syntaxin 18 complex); links NRZ to SNARE USE1. As to expression, broadly expressed, with highest levels in heart and skeletal muscle, and lowest levels in liver, small intestine and thymus. Well expressed in retinal ganglion cells, epidermal skin cells, and leukocytes. Up-regulated together with N-myc in some neuroblastoma cell lines.

It localises to the cytoplasm. Its subcellular location is the endoplasmic reticulum. The protein resides in the endoplasmic reticulum membrane. Functionally, involved in Golgi-to-endoplasmic reticulum (ER) retrograde transport; the function is proposed to depend on its association in the NRZ complex which is believed to play a role in SNARE assembly at the ER. Required for normal embryonic development. May play a role in the nonsense-mediated decay pathway of mRNAs containing premature stop codons. The sequence is that of NBAS subunit of NRZ tethering complex from Homo sapiens (Human).